The following is a 172-amino-acid chain: Small ribosomal subunit protein uS5 (172 aa).

One can recognise an S5 DRBM domain in the interval 17–80; the sequence is MREKMIAVNR…EEARRKMIKV (64 aa).

It belongs to the universal ribosomal protein uS5 family. In terms of assembly, part of the 30S ribosomal subunit. Contacts proteins S4 and S8.

Functionally, with S4 and S12 plays an important role in translational accuracy. Its function is as follows. Located at the back of the 30S subunit body where it stabilizes the conformation of the head with respect to the body. In Janthinobacterium sp. (strain Marseille) (Minibacterium massiliensis), this protein is Small ribosomal subunit protein uS5.